Reading from the N-terminus, the 423-residue chain is uncharacterized protein (423 aa).

Positions 1-16 (MKSRIFFITLLTIVAA) are cleaved as a signal peptide. The Extracellular portion of the chain corresponds to 17–402 (QESADQLCSS…SSSAKEEQTS (386 aa)). Intrachain disulfides connect cysteine 24-cysteine 217, cysteine 33-cysteine 43, cysteine 36-cysteine 68, cysteine 46-cysteine 57, cysteine 219-cysteine 238, cysteine 230-cysteine 241, cysteine 243-cysteine 252, cysteine 254-cysteine 288, cysteine 271-cysteine 286, cysteine 280-cysteine 291, cysteine 293-cysteine 303, cysteine 305-cysteine 327, cysteine 310-cysteine 325, cysteine 319-cysteine 330, cysteine 332-cysteine 341, and cysteine 343-cysteine 350. N-linked (GlcNAc...) asparagine glycosylation is present at asparagine 65. A cysteine-rich tandem repeats region spans residues 215–350 (CGCECEKHPE…CSCSTASNNC (136 aa)). I-EGF domains lie at 219–253 (CEKH…DKCE), 254–304 (CPLA…KFCQ), and 305–342 (CDND…DDCS). N-linked (GlcNAc...) asparagine glycosylation is present at asparagine 274. An N-linked (GlcNAc...) asparagine glycan is attached at asparagine 307. The interval 354–406 (GTPAPEEKDKPESVPEEPEATEKPDDMPSDSDLEKELDESSSAKEEQTSSSGV) is disordered. Residues 380-392 (MPSDSDLEKELDE) are compositionally biased toward acidic residues. Residues 403–421 (SSGVVSRVCVLLTFFLLVL) form a helical membrane-spanning segment. At 422–423 (NF) the chain is on the cytoplasmic side.

This sequence belongs to the integrin beta chain family.

The protein localises to the membrane. This is an uncharacterized protein from Caenorhabditis elegans.